The primary structure comprises 196 residues: Holliday junction branch migration complex subunit RuvA (196 aa).

The segment at 1 to 63 (MYDYIKGILT…EDAHLLYGFA (63 aa)) is domain I. The segment at 64–142 (TENEKSVFLS…MSEEAGPVQQ (79 aa)) is domain II. The interval 142 to 146 (QVAPS) is flexible linker. Residues 147-196 (SENIALEEAMEAMEALGYRPAELKKIKKFFEGTNDTAENYIKSALKMLMK) form a domain III region.

Belongs to the RuvA family. As to quaternary structure, homotetramer. Forms an RuvA(8)-RuvB(12)-Holliday junction (HJ) complex. HJ DNA is sandwiched between 2 RuvA tetramers; dsDNA enters through RuvA and exits via RuvB. An RuvB hexamer assembles on each DNA strand where it exits the tetramer. Each RuvB hexamer is contacted by two RuvA subunits (via domain III) on 2 adjacent RuvB subunits; this complex drives branch migration. In the full resolvosome a probable DNA-RuvA(4)-RuvB(12)-RuvC(2) complex forms which resolves the HJ.

The protein localises to the cytoplasm. In terms of biological role, the RuvA-RuvB-RuvC complex processes Holliday junction (HJ) DNA during genetic recombination and DNA repair, while the RuvA-RuvB complex plays an important role in the rescue of blocked DNA replication forks via replication fork reversal (RFR). RuvA specifically binds to HJ cruciform DNA, conferring on it an open structure. The RuvB hexamer acts as an ATP-dependent pump, pulling dsDNA into and through the RuvAB complex. HJ branch migration allows RuvC to scan DNA until it finds its consensus sequence, where it cleaves and resolves the cruciform DNA. This chain is Holliday junction branch migration complex subunit RuvA, found in Streptococcus suis (strain 98HAH33).